A 159-amino-acid polypeptide reads, in one-letter code: ATP synthase subunit b (159 aa).

The helical transmembrane segment at 2–22 (EFNLVTIGFTIVNFIILMLIL) threads the bilayer.

It belongs to the ATPase B chain family. F-type ATPases have 2 components, F(1) - the catalytic core - and F(0) - the membrane proton channel. F(1) has five subunits: alpha(3), beta(3), gamma(1), delta(1), epsilon(1). F(0) has three main subunits: a(1), b(2) and c(10-14). The alpha and beta chains form an alternating ring which encloses part of the gamma chain. F(1) is attached to F(0) by a central stalk formed by the gamma and epsilon chains, while a peripheral stalk is formed by the delta and b chains.

The protein localises to the cell membrane. In terms of biological role, f(1)F(0) ATP synthase produces ATP from ADP in the presence of a proton or sodium gradient. F-type ATPases consist of two structural domains, F(1) containing the extramembraneous catalytic core and F(0) containing the membrane proton channel, linked together by a central stalk and a peripheral stalk. During catalysis, ATP synthesis in the catalytic domain of F(1) is coupled via a rotary mechanism of the central stalk subunits to proton translocation. Functionally, component of the F(0) channel, it forms part of the peripheral stalk, linking F(1) to F(0). This is ATP synthase subunit b from Clostridium acetobutylicum (strain ATCC 824 / DSM 792 / JCM 1419 / IAM 19013 / LMG 5710 / NBRC 13948 / NRRL B-527 / VKM B-1787 / 2291 / W).